Reading from the N-terminus, the 356-residue chain is Mitogen-activated protein kinase PMK1 (356 aa).

The 289-residue stretch at 24–312 (YDIQDVVGEG…VEEALKHPYL (289 aa)) folds into the Protein kinase domain. Residues 30–38 (VGEGAYGVV) and lysine 53 each bind ATP.

The protein belongs to the protein kinase superfamily. CMGC Ser/Thr protein kinase family. MAP kinase subfamily. Mg(2+) serves as cofactor. Phosphorylated by MST7.

The catalysed reaction is L-seryl-[protein] + ATP = O-phospho-L-seryl-[protein] + ADP + H(+). The enzyme catalyses L-threonyl-[protein] + ATP = O-phospho-L-threonyl-[protein] + ADP + H(+). Functionally, mitogen-activated protein kinase; part of the MST11-MST7-PMK1 MAP kinase (MAPK) cascade that is essential for appressorium formation, penetration and invasive growth. Central regulator of appressorium development that acts downstream of the cAMP signal. The MST11-MST7-PMK1 MAP kinase cascade transduces signals from the cell surface sensors MDB2 and SHO1 that recognize various surface signals such as surface hydrophobicity, cutin monomers, and rice leaf waxes. Regulates expression of secreted fungal effector proteins implicated of host immune defenses, preventing reactive oxygen species generation and excessive callose deposition at plasmodesmata. Furthermore, controls the hyphal constriction required for fungal growth from one rice cell to the neighboring cell, enabling host tissue colonization and blast disease. Targets downstream of the PMK1-MAPK pathway include transcription factor MST12 and pathogenicity-related genes GAS1 and GAS2, both of which are expressed during appressorium formation, even if regulation of MST12 is not associated with expression of GAS1 or GAS2. The chain is Mitogen-activated protein kinase PMK1 from Pyricularia oryzae (Rice blast fungus).